The following is a 498-amino-acid chain: ATP synthase subunit beta, chloroplastic (498 aa).

T6 bears the Phosphothreonine mark. The residue at position 13 (S13) is a Phosphoserine. 172–179 (GGAGVGKT) serves as a coordination point for ATP.

This sequence belongs to the ATPase alpha/beta chains family. As to quaternary structure, F-type ATPases have 2 components, CF(1) - the catalytic core - and CF(0) - the membrane proton channel. CF(1) has five subunits: alpha(3), beta(3), gamma(1), delta(1), epsilon(1). CF(0) has four main subunits: a(1), b(1), b'(1) and c(9-12).

The protein resides in the plastid. It localises to the chloroplast thylakoid membrane. It catalyses the reaction ATP + H2O + 4 H(+)(in) = ADP + phosphate + 5 H(+)(out). Functionally, produces ATP from ADP in the presence of a proton gradient across the membrane. The catalytic sites are hosted primarily by the beta subunits. In Barbarea verna (Land cress), this protein is ATP synthase subunit beta, chloroplastic.